Consider the following 174-residue polypeptide: UPF0113 protein APE_0516.1 (174 aa).

The protein belongs to the UPF0113 family.

The sequence is that of UPF0113 protein APE_0516.1 from Aeropyrum pernix (strain ATCC 700893 / DSM 11879 / JCM 9820 / NBRC 100138 / K1).